The sequence spans 150 residues: U1 small nuclear ribonucleoprotein C (150 aa).

Residues 4 to 36 (YYCDYCKSYLTHDTMSVRKSHLQGRNHIKFYCD) form a Matrin-type zinc finger. Residues 66–127 (SDAKKSNGSS…PPNLSGLPLP (62 aa)) are disordered. Over residues 80–92 (DIDKKENSSDHNK) the composition is skewed to basic and acidic residues. Residues 103–112 (NDNDDDDDEM) show a composition bias toward acidic residues.

It belongs to the U1 small nuclear ribonucleoprotein C family. As to quaternary structure, U1 snRNP is composed of the 7 core Sm proteins B/B', D1, D2, D3, E, F and G that assemble in a heptameric protein ring on the Sm site of the small nuclear RNA to form the core snRNP, and at least 3 U1 snRNP-specific proteins U1-70K, U1-A and U1-C. U1-C interacts with U1 snRNA and the 5' splice-site region of the pre-mRNA.

The protein resides in the nucleus. Functionally, component of the spliceosomal U1 snRNP, which is essential for recognition of the pre-mRNA 5' splice-site and the subsequent assembly of the spliceosome. U1-C is directly involved in initial 5' splice-site recognition for both constitutive and regulated alternative splicing. The interaction with the 5' splice-site seems to precede base-pairing between the pre-mRNA and the U1 snRNA. Stimulates commitment or early (E) complex formation by stabilizing the base pairing of the 5' end of the U1 snRNA and the 5' splice-site region. This chain is U1 small nuclear ribonucleoprotein C, found in Candida albicans (strain WO-1) (Yeast).